Consider the following 641-residue polypeptide: Homeobox protein ceh-38 (641 aa).

2 stretches are compositionally biased toward polar residues: residues 1–14 (MESS…TNGT) and 28–38 (DPSSTFINNTG). Disordered stretches follow at residues 1 to 79 (MESS…TSSA) and 129 to 244 (LHVD…GDRM). A compositionally biased stretch (low complexity) spans 52 to 79 (TISPHPITPSASTSSATSATEEPATSSA). A compositionally biased stretch (basic and acidic residues) spans 131–140 (VDSRRRESHD). Composition is skewed to polar residues over residues 167 to 183 (TPTN…SSLL) and 190 to 204 (NTIG…TFGS). The segment at residues 308–394 (NAEIGDDIYI…TRLAILDMKT (87 aa)) is a DNA-binding region (CUT). Disordered regions lie at residues 398–428 (NRAS…PVSK), 485–508 (GGNI…VGDT), and 552–641 (FGVS…LAAN). A DNA-binding region (homeobox) is located at residues 427 to 486 (SKRPRLVFTDIQKRTLQAIFKETQRPSREMQQTIAEHLRLDLSTVANFFMNARRRSRLGG). A compositionally biased stretch (acidic residues) spans 571–604 (HEDDEELDELNDSELAYEEDVEIGDEEEEDEEQA). Residues 613 to 626 (KVEELEEKTVIKEE) are compositionally biased toward basic and acidic residues.

This sequence belongs to the CUT homeobox family. In terms of tissue distribution, expressed in the embryo. After gastrulation, expressed in almost all cells. During larval and adult stages, expressed in the dorsal and ventral nerve cord, head and tail neurons, pharynx, gut and head.

It is found in the nucleus. Probable DNA-binding regulatory protein involved in cell-fate specification. The protein is Homeobox protein ceh-38 (ceh-38) of Caenorhabditis elegans.